The chain runs to 499 residues: L-arabinose isomerase (499 aa).

The Mn(2+) site is built by Glu306, Glu333, His350, and His449.

It belongs to the arabinose isomerase family. The cofactor is Mn(2+).

It carries out the reaction beta-L-arabinopyranose = L-ribulose. It functions in the pathway carbohydrate degradation; L-arabinose degradation via L-ribulose; D-xylulose 5-phosphate from L-arabinose (bacterial route): step 1/3. Its function is as follows. Catalyzes the conversion of L-arabinose to L-ribulose. This is L-arabinose isomerase from Aeromonas hydrophila subsp. hydrophila (strain ATCC 7966 / DSM 30187 / BCRC 13018 / CCUG 14551 / JCM 1027 / KCTC 2358 / NCIMB 9240 / NCTC 8049).